The following is a 465-amino-acid chain: Iron-sulfur cluster assembly SufBD family protein SSP1857 (465 aa).

The protein belongs to the iron-sulfur cluster assembly SufBD family.

This chain is Iron-sulfur cluster assembly SufBD family protein SSP1857, found in Staphylococcus saprophyticus subsp. saprophyticus (strain ATCC 15305 / DSM 20229 / NCIMB 8711 / NCTC 7292 / S-41).